The following is a 274-amino-acid chain: Large ribosomal subunit protein uL2cz/uL2cy (274 aa).

Residues 224–274 are disordered; that stretch reads NPVDHPHGGGEGRAPIGRKKPATPWGYPALGRRSRKRNKYSDNLILRRRSK.

The protein belongs to the universal ribosomal protein uL2 family. In terms of assembly, part of the 50S ribosomal subunit.

It localises to the plastid. The protein localises to the chloroplast. The sequence is that of Large ribosomal subunit protein uL2cz/uL2cy (rpl2-A) from Carica papaya (Papaya).